The sequence spans 421 residues: Enolase (421 aa).

Position 161 (glutamine 161) interacts with (2R)-2-phosphoglycerate. The active-site Proton donor is the glutamate 203. 3 residues coordinate Mg(2+): aspartate 240, glutamate 283, and aspartate 310. (2R)-2-phosphoglycerate is bound by residues lysine 335, arginine 364, serine 365, and lysine 386. Lysine 335 functions as the Proton acceptor in the catalytic mechanism.

Belongs to the enolase family. Mg(2+) serves as cofactor.

Its subcellular location is the cytoplasm. The protein resides in the secreted. It is found in the cell surface. It carries out the reaction (2R)-2-phosphoglycerate = phosphoenolpyruvate + H2O. It functions in the pathway carbohydrate degradation; glycolysis; pyruvate from D-glyceraldehyde 3-phosphate: step 4/5. In terms of biological role, catalyzes the reversible conversion of 2-phosphoglycerate (2-PG) into phosphoenolpyruvate (PEP). It is essential for the degradation of carbohydrates via glycolysis. This chain is Enolase, found in Sulfurimonas denitrificans (strain ATCC 33889 / DSM 1251) (Thiomicrospira denitrificans (strain ATCC 33889 / DSM 1251)).